The chain runs to 191 residues: Programmed cell death protein 6 (191 aa).

Ala2 bears the N-acetylalanine mark. 5 consecutive EF-hand domains span residues 23–58 (PDQS…GTWT), 59–89 (PFNP…TGVW), 90–125 (KYIT…FGYR), 126–161 (LSDQ…LQRL), and 162–191 (TDIF…FSIV). Ca(2+)-binding residues include Asp36, Asp38, Ser40, Val42, and Glu47. Ca(2+)-binding residues include Asp103, Asp105, Ser107, Met109, and Glu114. 4 residues coordinate Mg(2+): Asp169, Asp171, Asp173, and Trp175.

In terms of assembly, homodimer and heterodimer; heterodimerizes (via the EF-hand 5) with PEF1. Isoform 1 and isoform 2 self-associate; probably forming homodimers. Interacts with CPNE4 (via VWFA domain). Interacts with PDCD6IP; the interaction is calcium-dependent. Interacts with RBM22. Interacts with PLSCR4. Interacts with ANXA7 and TSG101. Interacts with DAPK1. Interacts with SEC31A; the interaction is calcium-dependent and promotes monoubiquitination of SEC31A. Interacts with ANXA11 (via N-terminus); the interaction is calcium-dependent. Interacts with PLSCR3 (via N-terminus); the interaction is calcium-dependent. Interacts with MCOLN1; the interaction is calcium-dependent. Interacts with KDR; the interaction is calcium-dependent. Interacts with HEBP2; the interaction is calcium-dependent. Interacts with TFG. Isoform 1: Interacts with SHISA5, leading to stabilize it. Isoform 2: Does not interact with SHISA5. Isoform 2: Does not interact with PDCD6IP, TSG101, ANXA7 and ANXA11.

It is found in the endoplasmic reticulum membrane. The protein resides in the cytoplasmic vesicle. It localises to the COPII-coated vesicle membrane. Its subcellular location is the cytoplasm. The protein localises to the nucleus. It is found in the endosome. Functionally, calcium sensor that plays a key role in processes such as endoplasmic reticulum (ER)-Golgi vesicular transport, endosomal biogenesis or membrane repair. Acts as an adapter that bridges unrelated proteins or stabilizes weak protein-protein complexes in response to calcium: calcium-binding triggers exposure of apolar surface, promoting interaction with different sets of proteins thanks to 3 different hydrophobic pockets, leading to translocation to membranes. Involved in ER-Golgi transport by promoting the association between PDCD6IP and TSG101, thereby bridging together the ESCRT-III and ESCRT-I complexes. Together with PEF1, acts as a calcium-dependent adapter for the BCR(KLHL12) complex, a complex involved in ER-Golgi transport by regulating the size of COPII coats. In response to cytosolic calcium increase, the heterodimer formed with PEF1 interacts with, and bridges together the BCR(KLHL12) complex and SEC31 (SEC31A or SEC31B), promoting monoubiquitination of SEC31 and subsequent collagen export, which is required for neural crest specification. Involved in the regulation of the distribution and function of MCOLN1 in the endosomal pathway. Promotes localization and polymerization of TFG at endoplasmic reticulum exit site. Required for T-cell receptor-, Fas-, and glucocorticoid-induced apoptosis. May mediate Ca(2+)-regulated signals along the death pathway: interaction with DAPK1 can accelerate apoptotic cell death by increasing caspase-3 activity. Its role in apoptosis may however be indirect, as suggested by knockout experiments. May inhibit KDR/VEGFR2-dependent angiogenesis; the function involves inhibition of VEGF-induced phosphorylation of the Akt signaling pathway. In case of infection by HIV-1 virus, indirectly inhibits HIV-1 production by affecting viral Gag expression and distribution. In terms of biological role, has a lower Ca(2+) affinity than isoform 1. The chain is Programmed cell death protein 6 (PDCD6) from Homo sapiens (Human).